Here is a 529-residue protein sequence, read N- to C-terminus: Bifunctional purine biosynthesis protein PurH (529 aa).

The region spanning 1–148 (MQQRRPVRRA…KNHKDVAIVV (148 aa)) is the MGS-like domain. Lysine 287 bears the N6-acetyllysine mark.

The protein belongs to the PurH family.

The catalysed reaction is (6R)-10-formyltetrahydrofolate + 5-amino-1-(5-phospho-beta-D-ribosyl)imidazole-4-carboxamide = 5-formamido-1-(5-phospho-D-ribosyl)imidazole-4-carboxamide + (6S)-5,6,7,8-tetrahydrofolate. The enzyme catalyses IMP + H2O = 5-formamido-1-(5-phospho-D-ribosyl)imidazole-4-carboxamide. The protein operates within purine metabolism; IMP biosynthesis via de novo pathway; 5-formamido-1-(5-phospho-D-ribosyl)imidazole-4-carboxamide from 5-amino-1-(5-phospho-D-ribosyl)imidazole-4-carboxamide (10-formyl THF route): step 1/1. It functions in the pathway purine metabolism; IMP biosynthesis via de novo pathway; IMP from 5-formamido-1-(5-phospho-D-ribosyl)imidazole-4-carboxamide: step 1/1. This Escherichia coli O8 (strain IAI1) protein is Bifunctional purine biosynthesis protein PurH.